Consider the following 144-residue polypeptide: Deoxyuridine 5'-triphosphate nucleotidohydrolase (144 aa).

S66, G79, D82, Y85, K90, R134, F139, and G140 together coordinate dUMP.

Belongs to the dUTPase family. Homotrimer. Mg(2+) is required as a cofactor.

It carries out the reaction dUTP + H2O = dUMP + diphosphate + H(+). Its pathway is pyrimidine metabolism; dUMP biosynthesis; dUMP from dCTP (dUTP route): step 2/2. Involved in nucleotide metabolism via production of dUMP, the immediate precursor of thymidine nucleotides, and decreases the intracellular concentration of dUTP so that uracil cannot be incorporated into DNA. In Candida glabrata (strain ATCC 2001 / BCRC 20586 / JCM 3761 / NBRC 0622 / NRRL Y-65 / CBS 138) (Yeast), this protein is Deoxyuridine 5'-triphosphate nucleotidohydrolase (DUT1).